The following is a 229-amino-acid chain: ABC transporter I family member 1 (229 aa).

Positions 11–228 (LLLQNVSCMR…LIDMLDRADI (218 aa)) constitute an ABC transporter domain. Residue 43 to 50 (GTNGSGKS) participates in ATP binding.

This sequence belongs to the ABC transporter superfamily. ABCI family.

It localises to the membrane. It catalyses the reaction heme b(in) + ATP + H2O = heme b(out) + ADP + phosphate + H(+). Its function is as follows. Part of the ABC transporter complex CcmAB involved in the biogenesis of c-type cytochromes; once thought to export heme, this seems not to be the case, but its exact role is uncertain. Responsible for energy coupling to the transport system. The sequence is that of ABC transporter I family member 1 (ABCI1) from Arabidopsis thaliana (Mouse-ear cress).